Reading from the N-terminus, the 366-residue chain is MIRTEEMLLNVGPQHPSTHGVFRLIIKIDGETIKEATPVIGYLHRGTEKIAESLQYTQIIPYTDRMDYLSAMTNNYVICHAVETMMGLEIPERAEYLRVLAMELGRVASHLVWWGTNLLDIGAVSPFLYAFREREMVINLLNELCGARLTFNYMRVGGVKWDAPDGWIQKVREFVPYMKEQLKGYHDLVSGNEIFVNRVKGIGIYSAEEAISYSLSGANLRCTGVKWDIRKDEPYSIYNQFDFDVPVGEVGDAWDRYMCRMAEIEESLKIIEQAAEQFPKEGSVMAKVPRIIKVPKGEAFVRIESPRGEIGCYIASEGKKEPYRLKFRRPSFYNLQILPKLLKGENIANLITILGGVDIVLGEVDG.

Belongs to the complex I 49 kDa subunit family. In terms of assembly, NDH-1 is composed of 14 different subunits. Subunits NuoB, C, D, E, F, and G constitute the peripheral sector of the complex.

It is found in the cell membrane. The enzyme catalyses a quinone + NADH + 5 H(+)(in) = a quinol + NAD(+) + 4 H(+)(out). Its function is as follows. NDH-1 shuttles electrons from NADH, via FMN and iron-sulfur (Fe-S) centers, to quinones in the respiratory chain. The immediate electron acceptor for the enzyme in this species is believed to be a menaquinone. Couples the redox reaction to proton translocation (for every two electrons transferred, four hydrogen ions are translocated across the cytoplasmic membrane), and thus conserves the redox energy in a proton gradient. This Bacillus cytotoxicus (strain DSM 22905 / CIP 110041 / 391-98 / NVH 391-98) protein is NADH-quinone oxidoreductase subunit D.